The following is a 237-amino-acid chain: Glucosamine-6-phosphate deaminase (237 aa).

Catalysis depends on D67, which acts as the Proton acceptor; for enolization step. Residue N136 is the For ring-opening step of the active site. Residue H138 is the Proton acceptor; for ring-opening step of the active site. E143 functions as the For ring-opening step in the catalytic mechanism.

It belongs to the glucosamine/galactosamine-6-phosphate isomerase family. NagB subfamily.

It catalyses the reaction alpha-D-glucosamine 6-phosphate + H2O = beta-D-fructose 6-phosphate + NH4(+). It participates in amino-sugar metabolism; N-acetylneuraminate degradation; D-fructose 6-phosphate from N-acetylneuraminate: step 5/5. Functionally, catalyzes the reversible isomerization-deamination of glucosamine 6-phosphate (GlcN6P) to form fructose 6-phosphate (Fru6P) and ammonium ion. This chain is Glucosamine-6-phosphate deaminase, found in Lysinibacillus sphaericus (strain C3-41).